A 339-amino-acid polypeptide reads, in one-letter code: MLEAQGSNHGCERQAPTASPASSAGHAVEVRPGLYLGGAAAVAEPGHLREAGITAVLTVDSEPAFPAGAGFEGLRSLFVPALDKPETDLLSHLDRCVAFIGQARSEGRAVLVHCHAGVSRSVAVVMAFIMKTDQLTFEKAYDILRTVKPEAKVNEGFEWQLKLYEAMGYEVDTSSAFYKQYRLQKVTEKCPKLWNLPQELFAVDPTTISQGLKDDILYKCRKCRRSLFRHSSILGHSEGSGPIAFAHKRTAPSSVLTTGSQAQCTSYFIEPVQWMESTLLGVMDGQLLCPKCSAKLGSFNWYGEQCSCGRWITPAFQIHKNRVDEMKMLPVLGSQTKKL.

Position 1 is an N-acetylmethionine (methionine 1). Residues 1 to 25 (MLEAQGSNHGCERQAPTASPASSAG) are disordered. Residues 26–170 (HAVEVRPGLY…LKLYEAMGYE (145 aa)) enclose the Tyrosine-protein phosphatase domain. Cysteine 114 (phosphocysteine intermediate) is an active-site residue. 115–120 (HAGVSR) is a binding site for substrate. Serine 334 bears the Phosphoserine mark.

It belongs to the protein-tyrosine phosphatase family. Non-receptor class dual specificity subfamily. In terms of assembly, monomer. Zn(2+) is required as a cofactor.

Its subcellular location is the nucleus. The protein localises to the cytoplasm. It is found in the cytosol. The catalysed reaction is O-phospho-L-tyrosyl-[protein] + H2O = L-tyrosyl-[protein] + phosphate. It carries out the reaction O-phospho-L-seryl-[protein] + H2O = L-seryl-[protein] + phosphate. The enzyme catalyses O-phospho-L-threonyl-[protein] + H2O = L-threonyl-[protein] + phosphate. Functionally, dual specificity phosphatase; can dephosphorylate both phosphotyrosine and phosphoserine or phosphothreonine residues. Can dephosphorylate glucokinase (in vitro). Has phosphatase activity with the synthetic substrate 6,8-difluoro-4-methylumbelliferyl phosphate and other in vitro substrates. This Mus musculus (Mouse) protein is Dual specificity protein phosphatase 12 (Dusp12).